Reading from the N-terminus, the 403-residue chain is Phosphopentomutase (403 aa).

Residues aspartate 13, aspartate 298, histidine 303, aspartate 339, histidine 340, and histidine 351 each contribute to the Mn(2+) site.

This sequence belongs to the phosphopentomutase family. Mn(2+) is required as a cofactor.

It is found in the cytoplasm. The catalysed reaction is 2-deoxy-alpha-D-ribose 1-phosphate = 2-deoxy-D-ribose 5-phosphate. It catalyses the reaction alpha-D-ribose 1-phosphate = D-ribose 5-phosphate. It functions in the pathway carbohydrate degradation; 2-deoxy-D-ribose 1-phosphate degradation; D-glyceraldehyde 3-phosphate and acetaldehyde from 2-deoxy-alpha-D-ribose 1-phosphate: step 1/2. Isomerase that catalyzes the conversion of deoxy-ribose 1-phosphate (dRib-1-P) and ribose 1-phosphate (Rib-1-P) to deoxy-ribose 5-phosphate (dRib-5-P) and ribose 5-phosphate (Rib-5-P), respectively. In Streptococcus pyogenes serotype M4 (strain MGAS10750), this protein is Phosphopentomutase.